Consider the following 201-residue polypeptide: Small ribosomal subunit protein uS4 (201 aa).

An S4 RNA-binding domain is found at 91-151; the sequence is SRLDNVVYRA…EKSQKMIWFE (61 aa).

This sequence belongs to the universal ribosomal protein uS4 family. As to quaternary structure, part of the 30S ribosomal subunit. Contacts protein S5. The interaction surface between S4 and S5 is involved in control of translational fidelity.

In terms of biological role, one of the primary rRNA binding proteins, it binds directly to 16S rRNA where it nucleates assembly of the body of the 30S subunit. With S5 and S12 plays an important role in translational accuracy. The chain is Small ribosomal subunit protein uS4 from Corynebacterium diphtheriae (strain ATCC 700971 / NCTC 13129 / Biotype gravis).